A 604-amino-acid polypeptide reads, in one-letter code: MISVKRNTWRALSLVIGDCRKKGNFEYCQDRTEKHSTMPDSPVDVKTQSRLTPPTMPPPPTTQGAPRTSSFTPTTLTNGTSHSPTALNGAPSPPNGFSNGPSSSSSSSLANQQLPPACGARQLSKLKRFLTTLQQFGNDISPEIGERVRTLVLGLVNSTLTIEEFHSKLQEATNFPLRPFVIPFLKANLPLLQRELLHCARLAKQNPAQYLAQHEQLLLDASTTSPVDSSELLLDVNENGKRRTPDRTKENGFDREPLHSEHPSKRPCTISPGQRYSPNNGLSYQPNGLPHPTPPPPQHYRLDDMAIAHHYRDSYRHPSHRDLRDRNRPMGLHGTRQEEMIDHRLTDREWAEEWKHLDHLLNCIMDMVEKTRRSLTVLRRCQEADREELNYWIRRYSDAEDLKKGGGSSSSHSRQQSPVNPDPVALDAHREFLHRPASGYVPEEIWKKAEEAVNEVKRQAMTELQKAVSEAERKAHDMITTERAKMERTVAEAKRQAAEDALAVINQQEDSSESCWNCGRKASETCSGCNTARYCGSFCQHKDWEKHHHICGQTLQAQQQGDTPAVSSSVTPNSGAGSPMDTPPAATPRSTTPGTPSTIETTPR.

Residues 32-114 (TEKHSTMPDS…SSSSLANQQL (83 aa)) are disordered. At serine 41 the chain carries Phosphoserine. Polar residues predominate over residues 63–86 (QGAPRTSSFTPTTLTNGTSHSPTA). Over residues 95-114 (NGFSNGPSSSSSSSLANQQL) the composition is skewed to low complexity. The region spanning 120-215 (ARQLSKLKRF…NPAQYLAQHE (96 aa)) is the TAFH domain. The segment at 230-298 (SELLLDVNEN…LPHPTPPPPQ (69 aa)) is disordered. Residues 238 to 264 (ENGKRRTPDRTKENGFDREPLHSEHPS) show a composition bias toward basic and acidic residues. Positions 271-285 (SPGQRYSPNNGLSYQ) are enriched in polar residues. The segment covering 289–298 (LPHPTPPPPQ) has biased composition (pro residues). Positions 337–383 (QEEMIDHRLTDREWAEEWKHLDHLLNCIMDMVEKTRRSLTVLRRCQE) are important for oligomerization. The segment at 337-383 (QEEMIDHRLTDREWAEEWKHLDHLLNCIMDMVEKTRRSLTVLRRCQE) is nervy homology region 2 (NHR2). The disordered stretch occupies residues 401–423 (DLKKGGGSSSSHSRQQSPVNPDP). The residue at position 417 (serine 417) is a Phosphoserine. A nervy homology region 3 (NHR3) region spans residues 443 to 492 (EEIWKKAEEAVNEVKRQAMTELQKAVSEAERKAHDMITTERAKMERTVAE). Zn(2+) contacts are provided by cysteine 515, cysteine 518, cysteine 526, cysteine 529, cysteine 535, cysteine 539, histidine 547, and cysteine 551. Residues 515–551 (CWNCGRKASETCSGCNTARYCGSFCQHKDWEKHHHIC) form an MYND-type zinc finger. The span at 557-576 (AQQQGDTPAVSSSVTPNSGA) shows a compositional bias: polar residues. The interval 557 to 604 (AQQQGDTPAVSSSVTPNSGAGSPMDTPPAATPRSTTPGTPSTIETTPR) is disordered. Positions 587-604 (TPRSTTPGTPSTIETTPR) are enriched in low complexity.

The protein belongs to the CBFA2T family. Homooligomer. Homotetramerization is mediated by nervy homology region 2 (NRH2). Can interact with CBFA2T2 and CBFA2T3; heterotetramerization between members of the CBFA2T family is proposed. Interacts with TCF12, SIN3A, HDAC1, HDAC2, HDAC3, NCOR1, NCOR2. Interacts with ATN1 (via its N-terminus); the interaction enhances the transcriptional repression. Interacts (via its N-terminus) with ZBTB16; the interaction increases the transcription repression activity of ZBTB16. AML1-MTG8/ETO fusion protein interacts with CBFB. AML1-MTG8/ETO is part of a stable transcription factor complex AETFC in leukemic cells; AETFC formation seems to be involved in recruitment of EP300. AML1-MTG8/ETO nervy homology region 2-mediated oligomerization is proposed to be homotypic, required for AML1-MTG8/ETO-mediated transformation of primary hematopoietic cells and is required for AML1-MTG8/ETO interaction with TCF12. As to expression, most abundantly expressed in brain. Lower levels in lung, heart, testis and ovary.

Its subcellular location is the nucleus. Functionally, transcriptional corepressor which facilitates transcriptional repression via its association with DNA-binding transcription factors and recruitment of other corepressors and histone-modifying enzymes. Can repress the expression of MMP7 in a ZBTB33-dependent manner. Can repress transactivation mediated by TCF12. Acts as a negative regulator of adipogenesis. The AML1-MTG8/ETO fusion protein frequently found in leukemic cells is involved in leukemogenesis and contributes to hematopoietic stem/progenitor cell self-renewal. The polypeptide is Protein CBFA2T1 (RUNX1T1) (Homo sapiens (Human)).